We begin with the raw amino-acid sequence, 381 residues long: Heme A synthase (381 aa).

5 consecutive transmembrane segments (helical) span residues 25 to 45 (GAVR…VAVG), 112 to 132 (LLGR…WWRG), 138 to 158 (LLLG…IGWI), 176 to 196 (LALH…LAAG), and 212 to 232 (VAGL…LVAG). H277 is a heme binding site. The next 3 helical transmembrane spans lie at 279–299 (LFAY…VRMA), 307–327 (AMGV…TLLL), and 329–349 (VPLW…IMAT). Position 337 (H337) interacts with heme.

It belongs to the COX15/CtaA family. Type 2 subfamily. Interacts with CtaB. The cofactor is heme b.

The protein localises to the cell membrane. The catalysed reaction is Fe(II)-heme o + 2 A + H2O = Fe(II)-heme a + 2 AH2. Its pathway is porphyrin-containing compound metabolism; heme A biosynthesis; heme A from heme O: step 1/1. Catalyzes the conversion of heme O to heme A by two successive hydroxylations of the methyl group at C8. The first hydroxylation forms heme I, the second hydroxylation results in an unstable dihydroxymethyl group, which spontaneously dehydrates, resulting in the formyl group of heme A. The protein is Heme A synthase of Methylorubrum populi (strain ATCC BAA-705 / NCIMB 13946 / BJ001) (Methylobacterium populi).